We begin with the raw amino-acid sequence, 369 residues long: Anhydro-N-acetylmuramic acid kinase (369 aa).

12-19 (GTSLDGVD) contributes to the ATP binding site.

Belongs to the anhydro-N-acetylmuramic acid kinase family.

It catalyses the reaction 1,6-anhydro-N-acetyl-beta-muramate + ATP + H2O = N-acetyl-D-muramate 6-phosphate + ADP + H(+). It functions in the pathway amino-sugar metabolism; 1,6-anhydro-N-acetylmuramate degradation. The protein operates within cell wall biogenesis; peptidoglycan recycling. Catalyzes the specific phosphorylation of 1,6-anhydro-N-acetylmuramic acid (anhMurNAc) with the simultaneous cleavage of the 1,6-anhydro ring, generating MurNAc-6-P. Is required for the utilization of anhMurNAc either imported from the medium or derived from its own cell wall murein, and thus plays a role in cell wall recycling. The polypeptide is Anhydro-N-acetylmuramic acid kinase (Escherichia coli O139:H28 (strain E24377A / ETEC)).